Here is a 623-residue protein sequence, read N- to C-terminus: Glutathione import ATP-binding protein GsiA (623 aa).

ABC transporter domains are found at residues 15–269 (VSGL…QTLL) and 325–564 (LRSG…RKLM). ATP is bound by residues 49-56 (GESGSGKS) and 357-364 (GESGSGKS).

Belongs to the ABC transporter superfamily. Glutathione importer (TC 3.A.1.5.11) family. In terms of assembly, the complex is composed of two ATP-binding proteins (GsiA), two transmembrane proteins (GsiC and GsiD) and a solute-binding protein (GsiB).

Its subcellular location is the cell inner membrane. It catalyses the reaction glutathione(out) + ATP + H2O = glutathione(in) + ADP + phosphate + H(+). Functionally, part of the ABC transporter complex GsiABCD involved in glutathione import. Responsible for energy coupling to the transport system. This chain is Glutathione import ATP-binding protein GsiA, found in Salmonella choleraesuis (strain SC-B67).